The following is a 123-amino-acid chain: uncharacterized protein (123 aa).

The helical transmembrane segment at 5–25 (GTLVIIFAIVLILCIMLLFFY) threads the bilayer. Residues 32 to 53 (KSGVLPPPIPPPTPPPPKKKYD) are disordered. Pro residues predominate over residues 36–47 (LPPPIPPPTPPP).

This sequence belongs to the asfivirus CP123L family.

It localises to the host membrane. It is found in the virion. This is an uncharacterized protein from Ornithodoros (relapsing fever ticks).